The following is a 181-amino-acid chain: uncharacterized protein (181 aa).

It to M.jannaschii MJ1106.

This is an uncharacterized protein from Methanothermobacter thermautotrophicus (strain ATCC 29096 / DSM 1053 / JCM 10044 / NBRC 100330 / Delta H) (Methanobacterium thermoautotrophicum).